We begin with the raw amino-acid sequence, 352 residues long: Histidinol-phosphate aminotransferase (352 aa).

K210 is modified (N6-(pyridoxal phosphate)lysine).

The protein belongs to the class-II pyridoxal-phosphate-dependent aminotransferase family. Histidinol-phosphate aminotransferase subfamily. Homodimer. The cofactor is pyridoxal 5'-phosphate.

The enzyme catalyses L-histidinol phosphate + 2-oxoglutarate = 3-(imidazol-4-yl)-2-oxopropyl phosphate + L-glutamate. It participates in amino-acid biosynthesis; L-histidine biosynthesis; L-histidine from 5-phospho-alpha-D-ribose 1-diphosphate: step 7/9. The polypeptide is Histidinol-phosphate aminotransferase (Clostridium acetobutylicum (strain ATCC 824 / DSM 792 / JCM 1419 / IAM 19013 / LMG 5710 / NBRC 13948 / NRRL B-527 / VKM B-1787 / 2291 / W)).